The following is a 241-amino-acid chain: Sugar fermentation stimulation protein homolog (241 aa).

Belongs to the SfsA family.

The polypeptide is Sugar fermentation stimulation protein homolog (Hahella chejuensis (strain KCTC 2396)).